The sequence spans 478 residues: MEKLLNELSSENRPAYSVDSDVEIDAQIPENLKRSSGLGLPSITENDLSRHFTNLSRKNYALSTSFYPLGSCTMKYNPLINERVAKNEAFNFIHPYQPGKSMQGVLKIMYELEKDLCEISGMDCFSLQQAAGAHGEFTGLLIIAKYFKSIKQKRTKIIIPDTAHGTNPASAALAGFGTVSLKSESDGSILPEKLKKILTPEIAAVMLTVPNTLGAFEKNIPEISRIVHENGSLLYYDGANLNAVMGIVRPGDMGFDVMHINLHKTFSTPHGGGGPGSGPVGVKEFLEPFLPVPKIESRKSKFVLNYKKPKSIGKLKAFLGNFPVILKAYVYIKSLGAEGLKNVSEWAVLNANYMLARFKDKIDVPAGSRCMHEFVLSPKSLFKNNVKTLDVAKRLLDYGYYAPTIYFPLIVEEAVMLEPTETESKETMDAFIDTLIKIIYEEATQEPQKLKEAPFNTSVRRLNEVEAARNPVLKWKKA.

Position 264 is an N6-(pyridoxal phosphate)lysine (Lys264).

Belongs to the GcvP family. C-terminal subunit subfamily. As to quaternary structure, the glycine cleavage system is composed of four proteins: P, T, L and H. In this organism, the P 'protein' is a heterodimer of two subunits. It depends on pyridoxal 5'-phosphate as a cofactor.

It catalyses the reaction N(6)-[(R)-lipoyl]-L-lysyl-[glycine-cleavage complex H protein] + glycine + H(+) = N(6)-[(R)-S(8)-aminomethyldihydrolipoyl]-L-lysyl-[glycine-cleavage complex H protein] + CO2. Its function is as follows. The glycine cleavage system catalyzes the degradation of glycine. The P protein binds the alpha-amino group of glycine through its pyridoxal phosphate cofactor; CO(2) is released and the remaining methylamine moiety is then transferred to the lipoamide cofactor of the H protein. This chain is Probable glycine dehydrogenase (decarboxylating) subunit 2, found in Endomicrobium trichonymphae.